Here is a 166-residue protein sequence, read N- to C-terminus: MIYIDNRQNKIKVNEELENKIKEIIDYALKEEKVNIDYEISVVFIDNNSIKEINKDYRNIDKATDVLSFPMLDYEEGKVFKDIYLNYEFDESDLDEGNLVLGDIALSLEKAEEQSKEFGHSFLRETCYLTIHSVLHLLGYDHMEEDEKVIMRQREEEILKSFNLHR.

His132, His136, and His142 together coordinate Zn(2+).

This sequence belongs to the endoribonuclease YbeY family. Requires Zn(2+) as cofactor.

It localises to the cytoplasm. Functionally, single strand-specific metallo-endoribonuclease involved in late-stage 70S ribosome quality control and in maturation of the 3' terminus of the 16S rRNA. This is Endoribonuclease YbeY from Clostridium botulinum (strain Langeland / NCTC 10281 / Type F).